Consider the following 730-residue polypeptide: Hepatocyte growth factor (730 aa).

A signal peptide spans Met1–Gly31. At Gln32 the chain carries Pyrrolidone carboxylic acid. The PAN domain occupies Asn37–Asp123. 8 cysteine pairs are disulfide-bonded: Cys70–Cys96, Cys74–Cys84, Cys128–Cys206, Cys149–Cys189, Cys177–Cys201, Cys211–Cys288, Cys232–Cys271, and Cys260–Cys283. Kringle domains follow at residues Cys128 to Cys206 and Cys211 to Cys288. Asn294 is a glycosylation site (N-linked (GlcNAc...) asparagine). Cystine bridges form between Cys305/Cys383, Cys326/Cys365, Cys354/Cys377, Cys391/Cys469, Cys412/Cys452, Cys440/Cys464, Cys487/Cys606, Cys519/Cys535, Cys614/Cys681, Cys644/Cys660, and Cys671/Cys699. 2 consecutive Kringle domains span residues Cys305 to Cys383 and Cys391 to Cys469. A Peptidase S1 domain is found at Val495–Leu723. Residues Asn568 and Asn655 are each glycosylated (N-linked (GlcNAc...) asparagine).

Belongs to the peptidase S1 family. Plasminogen subfamily. In terms of assembly, dimer of an alpha chain and a beta chain linked by a disulfide bond. Interacts with SRPX2; the interaction increases HGF mitogenic activity. The single-chain precursor undergoes proteolytic processing by TMPRSS13 resulting in an active two-chain form. The single-chain precursor undergoes proteolytic processing by HGFAC resulting in an active two-chain form.

In terms of biological role, potent mitogen for mature parenchymal hepatocyte cells, seems to be a hepatotrophic factor, and acts as a growth factor for a broad spectrum of tissues and cell types. Activating ligand for the receptor tyrosine kinase MET by binding to it and promoting its dimerization. Activates MAPK signaling following TMPRSS13 cleavage and activation. The sequence is that of Hepatocyte growth factor (HGF) from Bos taurus (Bovine).